The following is a 122-amino-acid chain: Large ribosomal subunit protein uL14 (122 aa).

Belongs to the universal ribosomal protein uL14 family. As to quaternary structure, part of the 50S ribosomal subunit. Forms a cluster with proteins L3 and L19. In the 70S ribosome, L14 and L19 interact and together make contacts with the 16S rRNA in bridges B5 and B8.

Functionally, binds to 23S rRNA. Forms part of two intersubunit bridges in the 70S ribosome. This Shewanella woodyi (strain ATCC 51908 / MS32) protein is Large ribosomal subunit protein uL14.